We begin with the raw amino-acid sequence, 1052 residues long: Swarming motility protein SwrC (1052 aa).

The protein belongs to the resistance-nodulation-cell division (RND) (TC 2.A.6) family.

Required for self-resistance to surfactin, an antimicrobial lipopeptide surfactant produced by B.subtilis. Also required for swarming motility. The polypeptide is Swarming motility protein SwrC (swrC) (Bacillus subtilis (strain 168)).